Here is a 100-residue protein sequence, read N- to C-terminus: NADH-quinone oxidoreductase subunit K (100 aa).

A run of 3 helical transmembrane segments spans residues 2–22 (IPLSWYMALATVLFCIGVAGF), 28–48 (IIVMLLSLELMLNGVNLNLVA), and 64–84 (FVITVAACEAAVGLGIVICLF).

The protein belongs to the complex I subunit 4L family. As to quaternary structure, NDH-1 is composed of 14 different subunits. Subunits NuoA, H, J, K, L, M, N constitute the membrane sector of the complex.

Its subcellular location is the cell inner membrane. It carries out the reaction a quinone + NADH + 5 H(+)(in) = a quinol + NAD(+) + 4 H(+)(out). In terms of biological role, NDH-1 shuttles electrons from NADH, via FMN and iron-sulfur (Fe-S) centers, to quinones in the respiratory chain. The immediate electron acceptor for the enzyme in this species is believed to be ubiquinone. Couples the redox reaction to proton translocation (for every two electrons transferred, four hydrogen ions are translocated across the cytoplasmic membrane), and thus conserves the redox energy in a proton gradient. The sequence is that of NADH-quinone oxidoreductase subunit K from Desulfovibrio desulfuricans (strain ATCC 27774 / DSM 6949 / MB).